A 393-amino-acid chain; its full sequence is NAD(P)H-quinone oxidoreductase subunit H, chloroplastic (393 aa).

The protein belongs to the complex I 49 kDa subunit family. NDH is composed of at least 16 different subunits, 5 of which are encoded in the nucleus.

It localises to the plastid. It is found in the chloroplast thylakoid membrane. It carries out the reaction a plastoquinone + NADH + (n+1) H(+)(in) = a plastoquinol + NAD(+) + n H(+)(out). The enzyme catalyses a plastoquinone + NADPH + (n+1) H(+)(in) = a plastoquinol + NADP(+) + n H(+)(out). NDH shuttles electrons from NAD(P)H:plastoquinone, via FMN and iron-sulfur (Fe-S) centers, to quinones in the photosynthetic chain and possibly in a chloroplast respiratory chain. The immediate electron acceptor for the enzyme in this species is believed to be plastoquinone. Couples the redox reaction to proton translocation, and thus conserves the redox energy in a proton gradient. The polypeptide is NAD(P)H-quinone oxidoreductase subunit H, chloroplastic (Brachypodium distachyon (Purple false brome)).